A 211-amino-acid polypeptide reads, in one-letter code: Small ribosomal subunit protein uS3 (211 aa).

The 69-residue stretch at 38-106 (LRKFIKKAFY…NIELNIIEVK (69 aa)) folds into the KH type-2 domain.

The protein belongs to the universal ribosomal protein uS3 family. As to quaternary structure, part of the 30S ribosomal subunit. Forms a tight complex with proteins S10 and S14.

Functionally, binds the lower part of the 30S subunit head. Binds mRNA in the 70S ribosome, positioning it for translation. This Ehrlichia ruminantium (strain Gardel) protein is Small ribosomal subunit protein uS3.